The chain runs to 78 residues: Defensin SD2 (78 aa).

An N-terminal signal peptide occupies residues 1-20; the sequence is MKSSMKMFAALLLVVMCLLA. 4 cysteine pairs are disulfide-bonded: Cys-34–Cys-78, Cys-45–Cys-65, Cys-51–Cys-72, and Cys-55–Cys-74.

Belongs to the DEFL family. As to expression, highest expression in flowers and to a lesser extent in leaves. Lower levels in hypocotyls. No expression in roots and cotyledons.

The protein resides in the secreted. It is found in the cell wall. In terms of biological role, may play a protective role in flowers by protecting the reproductive organs from potential pathogen attack. This is Defensin SD2 (SD2) from Helianthus annuus (Common sunflower).